Consider the following 112-residue polypeptide: Nitrogen regulatory protein P-II (112 aa).

Residue tyrosine 51 is modified to O-UMP-tyrosine.

It belongs to the P(II) protein family. In terms of assembly, homotrimer.

Functionally, in nitrogen-limiting conditions, when the ratio of Gln to 2-ketoglutarate decreases, P-II is uridylylated to P-II-UMP. P-II-UMP allows the deadenylation of glutamine synthetase (GS), thus activating the enzyme. Conversely, in nitrogen excess P-II is deuridylated and promotes the adenylation of GS. P-II indirectly controls the transcription of the GS gene (glnA). P-II prevents NR-II-catalyzed conversion of NR-I to NR-I-phosphate, the transcriptional activator of glnA. When P-II is uridylylated to P-II-UMP, these events are reversed. In Klebsiella oxytoca, this protein is Nitrogen regulatory protein P-II (glnB).